A 706-amino-acid chain; its full sequence is Envelope glycoprotein H (706 aa).

The N-terminal stretch at 1–18 (MQLLCVFCLVLLWEVGAA) is a signal peptide. The Virion surface segment spans residues 19-682 (SLSEVKLHLD…LYEERAHVVL (664 aa)). A glycan (N-linked (GlcNAc...) asparagine; by host) is linked at Asn-60. Disulfide bonds link Cys-120/Cys-312 and Cys-278/Cys-335. Positions 165 to 229 (DKFQYTGAMT…QSGDYSLVIV (65 aa)) are interaction with gL. N-linked (GlcNAc...) asparagine; by host glycosylation is present at Asn-435. 2 cysteine pairs are disulfide-bonded: Cys-454-Cys-478 and Cys-534-Cys-587. Asn-549 and Asn-604 each carry an N-linked (GlcNAc...) asparagine; by host glycan. A disulfide bridge links Cys-612 with Cys-615. Asn-664 carries an N-linked (GlcNAc...) asparagine; by host glycan. A helical membrane pass occupies residues 683-703 (AIILYFIAFALGIFLVHKIVM). The Intravirion portion of the chain corresponds to 704–706 (FFL).

The protein belongs to the herpesviridae glycoprotein H family. Interacts with glycoprotein L (gL); this interaction is necessary for the correct processing and cell surface expression of gH. The heterodimer gH/gL seems to interact with gB trimers during fusion. The heterodimer gH/gL interacts with host EPHA2 to facilitate virus internalization and fusion. Interacts with glycoprotein 42/BZLF2. In terms of processing, N-glycosylated, O-glycosylated, and sialylated.

The protein resides in the virion membrane. The protein localises to the host cell membrane. It is found in the host endosome membrane. The heterodimer glycoprotein H-glycoprotein L is required for the fusion of viral and plasma membranes leading to virus entry into the host cell. Following initial binding to host receptor, membrane fusion is mediated by the fusion machinery composed of gB and the heterodimer gH/gL. May also be involved in the fusion between the virion envelope and the outer nuclear membrane during virion morphogenesis. The heterodimer gH/gL targets also host EPHA2 to promote viral entry. The protein is Envelope glycoprotein H of Homo sapiens (Human).